Reading from the N-terminus, the 111-residue chain is uncharacterized protein (111 aa).

The protein belongs to the UPF0440 family.

This is an uncharacterized protein from Pyrococcus furiosus (strain ATCC 43587 / DSM 3638 / JCM 8422 / Vc1).